A 351-amino-acid chain; its full sequence is Nicotinate-nucleotide--dimethylbenzimidazole phosphoribosyltransferase (351 aa).

The active-site Proton acceptor is glutamate 317.

The protein belongs to the CobT family.

The enzyme catalyses 5,6-dimethylbenzimidazole + nicotinate beta-D-ribonucleotide = alpha-ribazole 5'-phosphate + nicotinate + H(+). It participates in nucleoside biosynthesis; alpha-ribazole biosynthesis; alpha-ribazole from 5,6-dimethylbenzimidazole: step 1/2. Functionally, catalyzes the synthesis of alpha-ribazole-5'-phosphate from nicotinate mononucleotide (NAMN) and 5,6-dimethylbenzimidazole (DMB). The protein is Nicotinate-nucleotide--dimethylbenzimidazole phosphoribosyltransferase of Pseudomonas putida (strain GB-1).